We begin with the raw amino-acid sequence, 463 residues long: Trigger factor (463 aa).

Residues 162–243 form the PPIase FKBP-type domain; that stretch reads GDVVTLDLEA…VSQVAARELP (82 aa). Positions 427–463 are disordered; sequence TNGEIVDLDDEDETESTPETTEAAEAAEESTEDKPEA. Positions 432-442 are enriched in acidic residues; the sequence is VDLDDEDETES.

It belongs to the FKBP-type PPIase family. Tig subfamily.

The protein resides in the cytoplasm. It carries out the reaction [protein]-peptidylproline (omega=180) = [protein]-peptidylproline (omega=0). In terms of biological role, involved in protein export. Acts as a chaperone by maintaining the newly synthesized protein in an open conformation. Functions as a peptidyl-prolyl cis-trans isomerase. This Streptomyces avermitilis (strain ATCC 31267 / DSM 46492 / JCM 5070 / NBRC 14893 / NCIMB 12804 / NRRL 8165 / MA-4680) protein is Trigger factor.